The primary structure comprises 498 residues: MFSLQEICRKNIYFLPDWLSEHVIQRLGLYWEKHGSLQRIGDDYVLIQQDLIIPINEALRMAGEEGSDEVVQLLLLWEGNIHYAIIGALEGDHYSLIRKLYDQIEDCHDILPLIQDPKIFEKCHELDKSCNILCLVLHAVKNDMPCILQDYKTHLSGEDIQVVFETACRSQKYDIVRWMGQNIAIYNPEVIFNIAFDKINTTLLSIGYTLLFNHRINNMNENIDSLLTQHLEWAAGMGLLHFMLETLKYGGDVTIAVLSEAVKYDHRKVLDYFLRRKNLYQEDLEELLLLAIRADCSKKTLNLLLSYLNYSINNIRKKILQCVKEYETTIIIKILWKRKINLIGPILADFIGYHSYTYMVDFMREFSIHPEKMIKMAARESREDLIIKFSKNVCKEPKDRLHYLKSLVYTMRHKEGKQLLIYTIHNLYKACHLESKEMFNLARFYARHNAVIQFKSICQDLSKLNINIKNLLLECLRIAIKKNYPQLIRTIKTDMSYE.

The protein belongs to the asfivirus MGF 505 family.

Plays a role in virus cell tropism, and may be required for efficient virus replication in macrophages. The sequence is that of Protein MGF 505-5R from Ornithodoros (relapsing fever ticks).